A 276-amino-acid chain; its full sequence is Mitochondrial outer membrane protein porin 1 (276 aa).

Belongs to the eukaryotic mitochondrial porin (TC 1.B.8.1) family. In terms of tissue distribution, expressed in shoot meristems, root meristematic zone, lateral roots, leaves, stigma and anthers.

The protein resides in the mitochondrion outer membrane. Forms a channel through the mitochondrial outer membrane that allows diffusion of small hydrophilic molecules. The channel adopts an open conformation at low or zero membrane potential and a closed conformation at potentials above 30-40 mV. The open state has a weak anion selectivity whereas the closed state is cation-selective. Involved in plant development at reproductive stage, is important for pollen development and may regulate hydrogen peroxide generation during disease resistance. This is Mitochondrial outer membrane protein porin 1 (VDAC1) from Arabidopsis thaliana (Mouse-ear cress).